Here is a 572-residue protein sequence, read N- to C-terminus: NADP-dependent malic enzyme (572 aa).

At Met1 the chain carries N-acetylmethionine. Tyr102 functions as the Proton donor in the catalytic mechanism. Position 155 (Arg155) interacts with NADP(+). The active-site Proton acceptor is the Lys173. Residues Glu245, Asp246, and Asp269 each coordinate a divalent metal cation. NADP(+)-binding positions include Asp269 and 301 to 318; that span reads GAGEAALGIAHLIVMALE. Ser336 carries the phosphoserine modification. Asn408 contributes to the NADP(+) binding site.

It belongs to the malic enzymes family. Homotetramer. Mg(2+) is required as a cofactor. It depends on Mn(2+) as a cofactor. As to expression, expressed in all tissues tested including liver, placenta and white adipose tissue.

It is found in the cytoplasm. The enzyme catalyses (S)-malate + NADP(+) = pyruvate + CO2 + NADPH. It catalyses the reaction oxaloacetate + H(+) = pyruvate + CO2. Its function is as follows. Catalyzes the oxidative decarboxylation of (S)-malate in the presence of NADP(+) and divalent metal ions, and decarboxylation of oxaloacetate. The polypeptide is NADP-dependent malic enzyme (Homo sapiens (Human)).